The chain runs to 135 residues: 30 kDa antigenic glycoprotein (135 aa).

The first 5 residues, 1 to 5, serve as a signal peptide directing secretion; that stretch reads GNTYS. Residues N22, N31, N57, and N73 are each glycosylated (N-linked (GlcNAc...) asparagine).

This sequence to H.contortus 15 kDa excretory/secretory protein.

It localises to the secreted. This Trichostrongylus colubriformis (Black scour worm) protein is 30 kDa antigenic glycoprotein.